The chain runs to 363 residues: 3-dehydroquinate synthase (363 aa).

Residues 70-75, 104-108, 128-129, K141, K150, and 168-171 each bind NAD(+); these read SGETSK, GVIGD, TT, and TLDT. The Zn(2+) site is built by E183, H245, and H262.

The protein belongs to the sugar phosphate cyclases superfamily. Dehydroquinate synthase family. Co(2+) serves as cofactor. Requires Zn(2+) as cofactor. NAD(+) is required as a cofactor.

The protein resides in the cytoplasm. It catalyses the reaction 7-phospho-2-dehydro-3-deoxy-D-arabino-heptonate = 3-dehydroquinate + phosphate. The protein operates within metabolic intermediate biosynthesis; chorismate biosynthesis; chorismate from D-erythrose 4-phosphate and phosphoenolpyruvate: step 2/7. Its function is as follows. Catalyzes the conversion of 3-deoxy-D-arabino-heptulosonate 7-phosphate (DAHP) to dehydroquinate (DHQ). The chain is 3-dehydroquinate synthase from Alkaliphilus oremlandii (strain OhILAs) (Clostridium oremlandii (strain OhILAs)).